A 460-amino-acid polypeptide reads, in one-letter code: Proton extrusion protein PxcA (460 aa).

Residues 84-194 (RLPDPEQNGS…KTNLDNSNAP (111 aa)) are disordered. Basic and acidic residues predominate over residues 114 to 136 (NDGKDAENGRQSRDPSILEKLEF). The segment covering 167-194 (LTSSQPEPSDPSIKTNLAKTNLDNSNAP) has biased composition (polar residues). 4 consecutive transmembrane segments (helical) span residues 242 to 262 (FLLL…HFLF), 337 to 357 (GLKN…LILI), 373 to 393 (IYGL…DVFV), and 420 to 440 (FIYG…KYWI).

It belongs to the CemA family.

It is found in the cell inner membrane. Required for H(+) efflux immediately after light irradiation to form a rapid H(+) concentration gradient across the thylakoid membranes. Together with PxcL, contributes to transient H(+) uptake following dark to light transition. This chain is Proton extrusion protein PxcA, found in Synechococcus sp. (strain JA-3-3Ab) (Cyanobacteria bacterium Yellowstone A-Prime).